A 1005-amino-acid polypeptide reads, in one-letter code: Espin-like protein (1005 aa).

ANK repeat units follow at residues methionine 1 to isoleucine 31, leucine 35 to asparagine 64, asparagine 69 to aspartate 99, serine 103 to leucine 132, glutamate 136 to glutamine 166, serine 170 to leucine 200, aspartate 204 to alanine 234, glutamate 238 to arginine 267, tryptophan 270 to leucine 299, and aspartate 303 to valine 332. 2 disordered regions span residues glutamate 355–glutamate 383 and alanine 458–glutamine 480. Over residues alanine 458–glutamine 469 the composition is skewed to basic and acidic residues. A coiled-coil region spans residues glutamate 502 to leucine 539. Disordered stretches follow at residues leucine 611 to isoleucine 643, proline 692 to leucine 729, leucine 764 to glycine 794, and proline 951 to serine 975.

In terms of assembly, interacts with MYO3A (via C-terminus). Interacts with MYO3B (via C-terminus). As to expression, expressed in inner ear hair cells. Expressed in utricle hair bundles (at protein level). Expressed in choclea (at protein level).

It localises to the cell projection. Its subcellular location is the stereocilium. In terms of biological role, binds to but does not cross-link actin. Required for the formation and maintenance of inner ear hair cell stereocilia and staircase formation. Essential for normal hearing. In Mus musculus (Mouse), this protein is Espin-like protein (Espnl).